The primary structure comprises 154 residues: Superoxide dismutase [Cu-Zn] (154 aa).

Histidine 47, histidine 49, and histidine 64 together coordinate Cu cation. Cysteine 58 and cysteine 147 form a disulfide bridge. 4 residues coordinate Zn(2+): histidine 64, histidine 72, histidine 81, and aspartate 84. Residue histidine 121 coordinates Cu cation.

It belongs to the Cu-Zn superoxide dismutase family. Homodimer. Requires Cu cation as cofactor. The cofactor is Zn(2+).

The protein localises to the cytoplasm. The enzyme catalyses 2 superoxide + 2 H(+) = H2O2 + O2. Functionally, destroys radicals which are normally produced within the cells and which are toxic to biological systems. This Pinus sylvestris (Scotch pine) protein is Superoxide dismutase [Cu-Zn] (SODCC).